The primary structure comprises 369 residues: Peptide chain release factor 2 (369 aa).

Position 251 is an N5-methylglutamine (glutamine 251).

Belongs to the prokaryotic/mitochondrial release factor family. In terms of processing, methylated by PrmC. Methylation increases the termination efficiency of RF2.

Its subcellular location is the cytoplasm. Peptide chain release factor 2 directs the termination of translation in response to the peptide chain termination codons UGA and UAA. The sequence is that of Peptide chain release factor 2 (prfB) from Chlamydia muridarum (strain MoPn / Nigg).